Consider the following 227-residue polypeptide: Cytochrome c oxidase subunit 2 (227 aa).

At methionine 1–serine 14 the chain is on the mitochondrial intermembrane side. The chain crosses the membrane as a helical span at residues proline 15–methionine 45. Topologically, residues leucine 46 to glutamine 59 are mitochondrial matrix. The chain crosses the membrane as a helical span at residues glutamate 60–methionine 87. The Mitochondrial intermembrane segment spans residues aspartate 88–valine 227. Cu cation contacts are provided by histidine 161, cysteine 196, glutamate 198, cysteine 200, histidine 204, and methionine 207. Glutamate 198 serves as a coordination point for Mg(2+). Position 218 is a phosphotyrosine (tyrosine 218).

It belongs to the cytochrome c oxidase subunit 2 family. As to quaternary structure, component of the cytochrome c oxidase (complex IV, CIV), a multisubunit enzyme composed of 14 subunits. The complex is composed of a catalytic core of 3 subunits MT-CO1, MT-CO2 and MT-CO3, encoded in the mitochondrial DNA, and 11 supernumerary subunits COX4I, COX5A, COX5B, COX6A, COX6B, COX6C, COX7A, COX7B, COX7C, COX8 and NDUFA4, which are encoded in the nuclear genome. The complex exists as a monomer or a dimer and forms supercomplexes (SCs) in the inner mitochondrial membrane with NADH-ubiquinone oxidoreductase (complex I, CI) and ubiquinol-cytochrome c oxidoreductase (cytochrome b-c1 complex, complex III, CIII), resulting in different assemblies (supercomplex SCI(1)III(2)IV(1) and megacomplex MCI(2)III(2)IV(2)). Found in a complex with TMEM177, COA6, COX18, COX20, SCO1 and SCO2. Interacts with TMEM177 in a COX20-dependent manner. Interacts with COX20. Interacts with COX16. The cofactor is Cu cation.

It localises to the mitochondrion inner membrane. It carries out the reaction 4 Fe(II)-[cytochrome c] + O2 + 8 H(+)(in) = 4 Fe(III)-[cytochrome c] + 2 H2O + 4 H(+)(out). Functionally, component of the cytochrome c oxidase, the last enzyme in the mitochondrial electron transport chain which drives oxidative phosphorylation. The respiratory chain contains 3 multisubunit complexes succinate dehydrogenase (complex II, CII), ubiquinol-cytochrome c oxidoreductase (cytochrome b-c1 complex, complex III, CIII) and cytochrome c oxidase (complex IV, CIV), that cooperate to transfer electrons derived from NADH and succinate to molecular oxygen, creating an electrochemical gradient over the inner membrane that drives transmembrane transport and the ATP synthase. Cytochrome c oxidase is the component of the respiratory chain that catalyzes the reduction of oxygen to water. Electrons originating from reduced cytochrome c in the intermembrane space (IMS) are transferred via the dinuclear copper A center (CU(A)) of subunit 2 and heme A of subunit 1 to the active site in subunit 1, a binuclear center (BNC) formed by heme A3 and copper B (CU(B)). The BNC reduces molecular oxygen to 2 water molecules using 4 electrons from cytochrome c in the IMS and 4 protons from the mitochondrial matrix. The sequence is that of Cytochrome c oxidase subunit 2 (MT-CO2) from Vulpes zerda (Fennec fox).